The chain runs to 632 residues: PAN2-PAN3 deadenylation complex subunit PAN3 (632 aa).

Disordered regions lie at residues 1–22 and 99–127; these read MQPG…PHQL and PTFG…PPTL. Residues 107 to 116 are compositionally biased toward basic residues; the sequence is MNHRASHHHQ. The segment covering 117-127 has biased composition (polar residues); that stretch reads SPQMAQQPPTL. A pseudokinase domain region spans residues 223-494; sequence KADSAIIGDI…TINEIMPMIG (272 aa). ATP-binding positions include Arg-270, 321–328, and 397–398; these read DYYPLAGT and NK. A coiled-coil region spans residues 495 to 533; sequence GRFFTVMENMQAKTDVLEAELSREMENGRLFRLVAKMNT. The segment at 534 to 632 is knob domain; that stretch reads VLERVEHGTD…LLGTNMMLHR (99 aa).

The protein belongs to the protein kinase superfamily. PAN3 family. Homodimer. Forms a heterotrimer with a catalytic subunit PAN2 to form the poly(A)-nuclease (PAN) deadenylation complex. Interacts (via PAM-2 motif) with poly(A)-binding protein (via PABC domain), conferring substrate specificity of the enzyme complex. Interacts with the GW182 family protein ain-1. As to expression, highly expressed in germ cells.

It is found in the cytoplasm. The protein localises to the P-body. Functionally, regulatory subunit of the poly(A)-nuclease (PAN) deadenylation complex, one of two cytoplasmic mRNA deadenylases involved in general and miRNA-mediated mRNA turnover. PAN specifically shortens poly(A) tails of RNA and the activity is stimulated by poly(A)-binding protein (PABP). PAN deadenylation is followed by rapid degradation of the shortened mRNA tails by the CCR4-NOT complex. Deadenylated mRNAs are then degraded by two alternative mechanisms, namely exosome-mediated 3'-5' exonucleolytic degradation, or deadenylation-dependent mRNA decaping and subsequent 5'-3' exonucleolytic degradation by XRN1. PAN3 acts as a positive regulator for PAN activity, recruiting the catalytic subunit PAN2 to mRNA via its interaction with RNA and PABP, and to miRNA targets via its interaction with GW182 family proteins. Within the PAN complex, may positively regulate fertility. This Caenorhabditis elegans protein is PAN2-PAN3 deadenylation complex subunit PAN3.